A 178-amino-acid polypeptide reads, in one-letter code: Gamma-crystallin S (178 aa).

An N-acetylserine modification is found at serine 2. An N-terminal arm region spans residues 2–5 (SKSG). 2 consecutive Beta/gamma crystallin 'Greek key' domains span residues 6 to 44 (TKITFYEDKHFQGRHYDCDCDCADFHMYLSRCNSIRVEG) and 45 to 87 (GTWA…RAVH). The segment at 88 to 93 (LSSGGQ) is connecting peptide. Beta/gamma crystallin 'Greek key' domains lie at 94-134 (YKIQ…KVLD) and 135-177 (GVWI…RRIV).

This sequence belongs to the beta/gamma-crystallin family. Monomer.

Functionally, crystallins are the dominant structural components of the vertebrate eye lens. The protein is Gamma-crystallin S (CRYGS) of Canis lupus familiaris (Dog).